We begin with the raw amino-acid sequence, 247 residues long: 3-deoxy-manno-octulosonate cytidylyltransferase (247 aa).

Belongs to the KdsB family.

The protein resides in the cytoplasm. The enzyme catalyses 3-deoxy-alpha-D-manno-oct-2-ulosonate + CTP = CMP-3-deoxy-beta-D-manno-octulosonate + diphosphate. It functions in the pathway nucleotide-sugar biosynthesis; CMP-3-deoxy-D-manno-octulosonate biosynthesis; CMP-3-deoxy-D-manno-octulosonate from 3-deoxy-D-manno-octulosonate and CTP: step 1/1. It participates in bacterial outer membrane biogenesis; lipopolysaccharide biosynthesis. Its function is as follows. Activates KDO (a required 8-carbon sugar) for incorporation into bacterial lipopolysaccharide in Gram-negative bacteria. The polypeptide is 3-deoxy-manno-octulosonate cytidylyltransferase (Bdellovibrio bacteriovorus (strain ATCC 15356 / DSM 50701 / NCIMB 9529 / HD100)).